The chain runs to 479 residues: mRNA export factor ICP27 homolog (479 aa).

The segment covering methionine 1–serine 15 has biased composition (low complexity). Disordered stretches follow at residues methionine 1–valine 78 and lysine 92–tryptophan 210. A compositionally biased stretch (acidic residues) spans threonine 35–glycine 44. Positions glutamate 132–glycine 142 are enriched in basic and acidic residues. The Zn(2+) site is built by cysteine 354, histidine 445, cysteine 449, and cysteine 454. The CHC2-type zinc-finger motif lies at cysteine 354–cysteine 454.

It belongs to the HHV-1 ICP27 protein family. Interacts with host XPO1 and with the XPO1 export pathway components small GTPase RAN and nucleoporin NUP214. Interacts with host SPEN, OTT1 and OTT3. Interacts with host SRSF1, SRSF3, SRSF7 and SRPK1. Interacts with host DHX9; this interaction may have an inhibitory effect on virion production. Interacts (via N-terminus) with host NXF1; this interaction plays a role in mRNA export. Phosphorylated by cellular protein kinase CK2.

Its subcellular location is the host nucleus. It localises to the host cytoplasm. Promotes the nuclear export of a subset of early and late viral mRNAs by interacting with mRNAs and cellular export proteins. Additionally may prevent the establishment of cellular antiviral state, by acting as an alternative splicing factor for cellular RNAs such as STAT1, resulting in a STAT1 mRNA incapable of producing the STAT1alpha isoform. The sequence is that of mRNA export factor ICP27 homolog from Homo sapiens (Human).